Consider the following 283-residue polypeptide: Nucleotide-binding protein DR_1434 (283 aa).

8–15 (GLSGSGKS) provides a ligand contact to ATP. Residue 57–60 (DTRT) participates in GTP binding.

This sequence belongs to the RapZ-like family.

Displays ATPase and GTPase activities. This is Nucleotide-binding protein DR_1434 from Deinococcus radiodurans (strain ATCC 13939 / DSM 20539 / JCM 16871 / CCUG 27074 / LMG 4051 / NBRC 15346 / NCIMB 9279 / VKM B-1422 / R1).